The following is a 1843-amino-acid chain: Cilia- and flagella-associated protein 44 (1843 aa).

A disordered region spans residues 1-86; that stretch reads MKEPDDQDTS…PPVEVKEEPE (86 aa). Polar residues predominate over residues 29–39; that stretch reads LKSSQDTTADS. Positions 41–58 are enriched in acidic residues; the sequence is TDGEESYLGDDLDLDDMD. WD repeat units follow at residues 214–255, 258–297, 308–346, 353–390, 456–495, 497–541, and 561–600; these read GAEK…PILR, AFSQ…TGLK, TSTS…VELC, CHSG…TADV, FHSG…PLVH, KFKQ…GLTV, and PHTD…KPIG. The tract at residues 701–726 is disordered; sequence REAFGEEEIPEEETSEEGEEEEPPLP. A compositionally biased stretch (acidic residues) spans 705–724; the sequence is GEEEIPEEETSEEGEEEEPP. WD repeat units follow at residues 790-829 and 842-881; these read TEDN…PFLV and NNYG…IVPK. Disordered stretches follow at residues 1040-1086, 1266-1291, and 1488-1524; these read YSKL…SVLE, QRKQ…SAGG, and KEVE…DDVF. The span at 1047–1071 shows a compositional bias: basic and acidic residues; that stretch reads SQSERRQSKMERLEKEGPGKKESQR. A Phosphoserine modification is found at S1069. Residues 1072–1081 are compositionally biased toward polar residues; that stretch reads DTGGSISLQE. A compositionally biased stretch (acidic residues) spans 1492–1524; that stretch reads GDADEDEESEESSEEESSLESDEDASGSEDDVF. Coiled-coil stretches lie at residues 1548-1603 and 1631-1665; these read RLDI…RLNE and LVFS…CRER. A WD 10 repeat occupies 1699–1744; it reads IDLEALQTLSVNTTLEELKIKKLRKELSNAKELRMWEEKIAQVRWD.

The protein belongs to the CFAP44 family. In terms of tissue distribution, expressed in testis.

The protein localises to the cell projection. Its subcellular location is the cilium. The protein resides in the flagellum. It is found in the cytoplasm. It localises to the cytoskeleton. The protein localises to the flagellum axoneme. Its function is as follows. Flagellar protein involved in sperm flagellum axoneme organization and function. This Mus musculus (Mouse) protein is Cilia- and flagella-associated protein 44.